The chain runs to 364 residues: Dihydroorotate dehydrogenase (quinone) (364 aa).

Residues 62–66 and T86 each bind FMN; that span reads AGFDK. A substrate-binding site is contributed by K66. 111 to 115 provides a ligand contact to substrate; that stretch reads NRMGF. FMN contacts are provided by N142 and N175. N175 lines the substrate pocket. The active-site Nucleophile is S178. Residue N180 participates in substrate binding. K216 and T244 together coordinate FMN. A substrate-binding site is contributed by 245–246; the sequence is NT. FMN-binding positions include G267, G296, and 317-318; that span reads YT.

It belongs to the dihydroorotate dehydrogenase family. Type 2 subfamily. Monomer. FMN serves as cofactor.

The protein localises to the cell membrane. It catalyses the reaction (S)-dihydroorotate + a quinone = orotate + a quinol. It participates in pyrimidine metabolism; UMP biosynthesis via de novo pathway; orotate from (S)-dihydroorotate (quinone route): step 1/1. Its function is as follows. Catalyzes the conversion of dihydroorotate to orotate with quinone as electron acceptor. The sequence is that of Dihydroorotate dehydrogenase (quinone) from Anaeromyxobacter dehalogenans (strain 2CP-C).